The primary structure comprises 303 residues: Eukaryotic translation initiation factor 3 subunit G (303 aa).

Disordered regions lie at residues 1 to 32, 81 to 100, 105 to 126, and 181 to 215; these read MAAV…QTIV, GLSA…VGEN, PSAN…NAMK, and GAAG…AGGK. The segment covering 109-126 has biased composition (basic and acidic residues); the sequence is WRKDQKDESKDANANAMK. The RRM domain occupies 223–301; the sequence is ATLRVTNVSE…LILRVEFAKK (79 aa).

The protein belongs to the eIF-3 subunit G family. Component of the eukaryotic translation initiation factor 3 (eIF-3) complex.

Its subcellular location is the cytoplasm. Functionally, RNA-binding component of the eukaryotic translation initiation factor 3 (eIF-3) complex, which is involved in protein synthesis of a specialized repertoire of mRNAs and, together with other initiation factors, stimulates binding of mRNA and methionyl-tRNAi to the 40S ribosome. The eIF-3 complex specifically targets and initiates translation of a subset of mRNAs involved in cell proliferation. This subunit can bind 18S rRNA. In Pyricularia oryzae (strain 70-15 / ATCC MYA-4617 / FGSC 8958) (Rice blast fungus), this protein is Eukaryotic translation initiation factor 3 subunit G.